A 395-amino-acid chain; its full sequence is MAKEVYDRSKPHVNIGTIGHVDHGKTTLSAAISKVLSDKGYSKATDFASIDAAPEERERGITINTAHIEYETEKRHYAHIDAPGHADYVKNMITGAAQMDGAILVVAATDGPMPQTREHILLSRQVGVKYLIVFLNKADLVDDEELMELVEMEVRDLLSEYDFPGDDIPVIAGSALGALNGEPQWVAKVEELMDIVDEYIPTPERDTDKPLLLPVEDVFSITGRGTVASGRIERGTVKVGDEVEIVGIKEETKKAVVTGIEMFRKTLTEGLAGDNVGALLRGIQRDEIERGQVIAKPGSITPHKLFEGEVYVLSKEEGGRHTPFFDNYRPQFYFHTTDVTGSVKLPEGTEMVMPGDNVHIDVELIHPVAIEQGTTFSIREGGRTVGSGIVAEIKA.

One can recognise a tr-type G domain in the interval 10 to 204 (KPHVNIGTIG…IVDEYIPTPE (195 aa)). Residues 19–26 (GHVDHGKT) are G1. Residue 19 to 26 (GHVDHGKT) participates in GTP binding. T26 is a binding site for Mg(2+). The tract at residues 60–64 (GITIN) is G2. Residues 81 to 84 (DAPG) are G3. GTP is bound by residues 81–85 (DAPGH) and 136–139 (NKAD). Residues 136–139 (NKAD) are G4. Positions 174 to 176 (SAL) are G5.

This sequence belongs to the TRAFAC class translation factor GTPase superfamily. Classic translation factor GTPase family. EF-Tu/EF-1A subfamily. As to quaternary structure, monomer.

It localises to the cytoplasm. It catalyses the reaction GTP + H2O = GDP + phosphate + H(+). In terms of biological role, GTP hydrolase that promotes the GTP-dependent binding of aminoacyl-tRNA to the A-site of ribosomes during protein biosynthesis. The chain is Elongation factor Tu from Lactococcus lactis subsp. lactis (strain IL1403) (Streptococcus lactis).